The chain runs to 252 residues: tRNA (guanine-N(7)-)-methyltransferase (252 aa).

The S-adenosyl-L-methionine site is built by Glu75, Glu100, Asp127, and Asp150. Asp150 is a catalytic residue. Residue Lys154 participates in substrate binding. Residues 156–161 (RHNKRR) form an interaction with RNA region. Substrate is bound by residues Asp186 and 223–226 (THFE).

The protein belongs to the class I-like SAM-binding methyltransferase superfamily. TrmB family.

It carries out the reaction guanosine(46) in tRNA + S-adenosyl-L-methionine = N(7)-methylguanosine(46) in tRNA + S-adenosyl-L-homocysteine. It functions in the pathway tRNA modification; N(7)-methylguanine-tRNA biosynthesis. Its function is as follows. Catalyzes the formation of N(7)-methylguanine at position 46 (m7G46) in tRNA. The polypeptide is tRNA (guanine-N(7)-)-methyltransferase (Xanthomonas oryzae pv. oryzae (strain MAFF 311018)).